The sequence spans 509 residues: Lysophospholipid acyltransferase (509 aa).

Topologically, residues 1-14 (MAYLIDIPFEYFSS) are lumenal. The chain crosses the membrane as a helical span at residues 15–35 (FLGVHPDQLKLLFCFLSAYPF). The Cytoplasmic portion of the chain corresponds to 36–55 (AGILKRLPSAPWIRNLFSIS). A helical membrane pass occupies residues 56–76 (IGLFYLIGVHHLYDGVLVLLF). Over 77–94 (DALFTYFVAAFYRSSRMP) the chain is Lumenal. The helical transmembrane segment at 95–115 (WIIFIVILGHTFSSHVIRYIY) threads the bilayer. The Cytoplasmic segment spans residues 116-223 (PSENTDITAS…LEPALGRCWR (108 aa)). A helical membrane pass occupies residues 224 to 244 (GLLWLILFITGSSIYPLKFLL). Topologically, residues 245 to 246 (TP) are lumenal. A helical membrane pass occupies residues 247-267 (KFASSPILLKYGYVCITAFVA). Over 268–410 (RMKYYGAWEL…TPGPFKRVYD (143 aa)) the chain is Cytoplasmic. Residue H363 is part of the active site. A helical transmembrane segment spans residues 411 to 431 (VIGMVATNLSLSYLIISFLLL). Topologically, residues 432-441 (NLKESIHVWK) are lumenal. A helical membrane pass occupies residues 442-462 (ELYFIVHIYILIALAVFNSPI). At 463 to 509 (RSKLDNKIRSRVNSYKLKSYEQSMKSTSDTDMLNMSVPKREDFENDE) the chain is on the cytoplasmic side. Residues 488–509 (STSDTDMLNMSVPKREDFENDE) form a disordered region. The residue at position 490 (S490) is a Phosphoserine. Residues 500–509 (PKREDFENDE) are compositionally biased toward basic and acidic residues.

This sequence belongs to the membrane-bound acyltransferase family.

It localises to the endoplasmic reticulum membrane. Its subcellular location is the microsome membrane. The catalysed reaction is a 1-acyl-sn-glycero-3-phosphate + an acyl-CoA = a 1,2-diacyl-sn-glycero-3-phosphate + CoA. It catalyses the reaction a 1-acyl-sn-glycero-3-phosphocholine + an acyl-CoA = a 1,2-diacyl-sn-glycero-3-phosphocholine + CoA. It carries out the reaction a 1-acyl-sn-glycero-3-phosphoethanolamine + an acyl-CoA = a 1,2-diacyl-sn-glycero-3-phosphoethanolamine + CoA. In terms of biological role, membrane-bound O-acyltransferase that mediates the incorporation of unsaturated acyl chains into the sn-2 position of phospholipids. The sequence is that of Lysophospholipid acyltransferase (ale1) from Schizosaccharomyces pombe (strain 972 / ATCC 24843) (Fission yeast).